The chain runs to 357 residues: Eugenol O-methyltransferase (357 aa).

Residues G203, D226, D246, M247, and K260 each coordinate S-adenosyl-L-methionine. H264 acts as the Proton acceptor in catalysis.

The protein belongs to the class I-like SAM-binding methyltransferase superfamily. Cation-independent O-methyltransferase family. COMT subfamily. Specifically expressed in the peltate glandular trichomes on the surface of the young basil leaves.

It catalyses the reaction (E)-isoeugenol + S-adenosyl-L-methionine = (E)-isomethyleugenol + S-adenosyl-L-homocysteine + H(+). It functions in the pathway aromatic compound metabolism; phenylpropanoid biosynthesis. Its function is as follows. Phenylpropene O-methyltransferase that catalyzes the methylation of the para-4-hydroxyl of eugenol to methyleugenol. Can also convert chavicol to methylchavicol but with less affinity. The sequence is that of Eugenol O-methyltransferase (EOMT1) from Ocimum basilicum (Sweet basil).